Here is a 182-residue protein sequence, read N- to C-terminus: NADH-quinone oxidoreductase subunit I (182 aa).

4Fe-4S ferredoxin-type domains follow at residues 52-82 (LTRDPDGEERCVACNLCAVACPVGCISLQKA) and 92-121 (DFFRINFSRCIFCGLCEEACPTTAIQLTPD). [4Fe-4S] cluster is bound by residues Cys-62, Cys-65, Cys-68, Cys-72, Cys-101, Cys-104, Cys-107, and Cys-111.

Belongs to the complex I 23 kDa subunit family. As to quaternary structure, NDH-1 is composed of 13 different subunits. Subunits NuoA, H, J, K, L, M, N constitute the membrane sector of the complex. [4Fe-4S] cluster is required as a cofactor.

It localises to the cell inner membrane. It catalyses the reaction a quinone + NADH + 5 H(+)(in) = a quinol + NAD(+) + 4 H(+)(out). NDH-1 shuttles electrons from NADH, via FMN and iron-sulfur (Fe-S) centers, to quinones in the respiratory chain. The immediate electron acceptor for the enzyme in this species is believed to be ubiquinone. Couples the redox reaction to proton translocation (for every two electrons transferred, four hydrogen ions are translocated across the cytoplasmic membrane), and thus conserves the redox energy in a proton gradient. The polypeptide is NADH-quinone oxidoreductase subunit I (Pseudomonas fluorescens (strain ATCC BAA-477 / NRRL B-23932 / Pf-5)).